The sequence spans 322 residues: 4-hydroxy-3-methylbut-2-enyl diphosphate reductase (322 aa).

Cys-12 lines the [4Fe-4S] cluster pocket. (2E)-4-hydroxy-3-methylbut-2-enyl diphosphate is bound by residues His-43 and His-81. Dimethylallyl diphosphate contacts are provided by His-43 and His-81. Positions 43 and 81 each coordinate isopentenyl diphosphate. Cys-103 contacts [4Fe-4S] cluster. (2E)-4-hydroxy-3-methylbut-2-enyl diphosphate is bound at residue His-131. Dimethylallyl diphosphate is bound at residue His-131. Isopentenyl diphosphate is bound at residue His-131. Glu-133 functions as the Proton donor in the catalytic mechanism. Thr-172 serves as a coordination point for (2E)-4-hydroxy-3-methylbut-2-enyl diphosphate. Cys-200 is a [4Fe-4S] cluster binding site. (2E)-4-hydroxy-3-methylbut-2-enyl diphosphate contacts are provided by Ser-228, Asn-230, and Ser-273. The dimethylallyl diphosphate site is built by Ser-228, Asn-230, and Ser-273. Isopentenyl diphosphate-binding residues include Ser-228, Asn-230, and Ser-273.

Belongs to the IspH family. The cofactor is [4Fe-4S] cluster.

It catalyses the reaction isopentenyl diphosphate + 2 oxidized [2Fe-2S]-[ferredoxin] + H2O = (2E)-4-hydroxy-3-methylbut-2-enyl diphosphate + 2 reduced [2Fe-2S]-[ferredoxin] + 2 H(+). It carries out the reaction dimethylallyl diphosphate + 2 oxidized [2Fe-2S]-[ferredoxin] + H2O = (2E)-4-hydroxy-3-methylbut-2-enyl diphosphate + 2 reduced [2Fe-2S]-[ferredoxin] + 2 H(+). Its pathway is isoprenoid biosynthesis; dimethylallyl diphosphate biosynthesis; dimethylallyl diphosphate from (2E)-4-hydroxy-3-methylbutenyl diphosphate: step 1/1. It functions in the pathway isoprenoid biosynthesis; isopentenyl diphosphate biosynthesis via DXP pathway; isopentenyl diphosphate from 1-deoxy-D-xylulose 5-phosphate: step 6/6. In terms of biological role, catalyzes the conversion of 1-hydroxy-2-methyl-2-(E)-butenyl 4-diphosphate (HMBPP) into a mixture of isopentenyl diphosphate (IPP) and dimethylallyl diphosphate (DMAPP). Acts in the terminal step of the DOXP/MEP pathway for isoprenoid precursor biosynthesis. The polypeptide is 4-hydroxy-3-methylbut-2-enyl diphosphate reductase (Macrococcus caseolyticus (strain JCSC5402) (Macrococcoides caseolyticum)).